The following is a 963-amino-acid chain: Putative RNA Helicase B962L (963 aa).

A Helicase ATP-binding domain is found at 43–229; it reads IPTSLADRVL…FGIGKENIIL (187 aa). 56–63 contributes to the ATP binding site; that stretch reads SRTGSGKS. The short motif at 167–170 is the DEAH box element; that stretch reads DEAH. The 207-residue stretch at 253–459 folds into the Helicase C-terminal domain; sequence ACETALTIHK…TIKKNKEGVF (207 aa). Residues 521–541 form a helical membrane-spanning segment; that stretch reads GYFWQAAISDIATILAVVSVV.

This sequence belongs to the DEAD box helicase family. DEAH subfamily.

It is found in the host membrane. It localises to the virion. It carries out the reaction ATP + H2O = ADP + phosphate + H(+). This chain is Putative RNA Helicase B962L, found in Ornithodoros (relapsing fever ticks).